The following is a 178-amino-acid chain: Ribosome maturation factor RimM (178 aa).

Residues 100 to 178 (AADEYYWYQL…VMRVEWDADF (79 aa)) form the PRC barrel domain.

Belongs to the RimM family. As to quaternary structure, binds ribosomal protein uS19.

It is found in the cytoplasm. An accessory protein needed during the final step in the assembly of 30S ribosomal subunit, possibly for assembly of the head region. Essential for efficient processing of 16S rRNA. May be needed both before and after RbfA during the maturation of 16S rRNA. It has affinity for free ribosomal 30S subunits but not for 70S ribosomes. This Pseudomonas putida (strain W619) protein is Ribosome maturation factor RimM.